The primary structure comprises 320 residues: Uridine phosphorylase 2 (320 aa).

Residues glycine 66, arginine 100, and 144–147 (RIGT) each bind phosphate. Cysteine 95 and cysteine 102 are disulfide-bonded. Uridine is bound by residues 148–149 (SG) and 223–225 (QGR).

It belongs to the PNP/UDP phosphorylase family. As to quaternary structure, homodimer. As to expression, liver specific.

It carries out the reaction uridine + phosphate = alpha-D-ribose 1-phosphate + uracil. It catalyses the reaction 2'-deoxyuridine + phosphate = 2-deoxy-alpha-D-ribose 1-phosphate + uracil. The protein operates within pyrimidine metabolism; UMP biosynthesis via salvage pathway; uracil from uridine (phosphorylase route): step 1/1. With respect to regulation, a conditional disulfide bridge can form within the protein that dislocates a critical phosphate-coordinating arginine Arg-100 away from the active site, disabling the enzyme. In terms of biological role, catalyzes the reversible phosphorylytic cleavage of uridine to uracil and ribose-1-phosphate which can then be utilized as carbon and energy sources or in the rescue of pyrimidine bases for nucleotide synthesis. Shows broad substrate specificity and can also accept deoxyuridine and other analogous compounds. This chain is Uridine phosphorylase 2, found in Mus musculus (Mouse).